The primary structure comprises 301 residues: Probable aspartoacylase (301 aa).

Positions 13 and 16 each coordinate Zn(2+). Substrate-binding positions include R54 and 61–62; that span reads NR. A Zn(2+)-binding site is contributed by H105. Positions 163 and 273 each coordinate substrate.

Belongs to the AspA/AstE family. Aspartoacylase subfamily. The cofactor is Zn(2+).

It carries out the reaction an N-acyl-L-aspartate + H2O = a carboxylate + L-aspartate. In Prochlorococcus marinus (strain MIT 9301), this protein is Probable aspartoacylase.